We begin with the raw amino-acid sequence, 807 residues long: Glycerol-3-phosphate acyltransferase (807 aa).

The short motif at 306–311 (HRSHMD) is the HXXXXD motif element.

The protein belongs to the GPAT/DAPAT family.

Its subcellular location is the cell inner membrane. It carries out the reaction sn-glycerol 3-phosphate + an acyl-CoA = a 1-acyl-sn-glycero-3-phosphate + CoA. Its pathway is phospholipid metabolism; CDP-diacylglycerol biosynthesis; CDP-diacylglycerol from sn-glycerol 3-phosphate: step 1/3. The chain is Glycerol-3-phosphate acyltransferase (plsB) from Escherichia coli O157:H7.